Here is a 364-residue protein sequence, read N- to C-terminus: tRNA 2-selenouridine synthase (364 aa).

Residues 14 to 137 enclose the Rhodanese domain; that stretch reads LLADTPLIDV…LRQTAIQATW (124 aa). C97 functions as the S-selanylcysteine intermediate in the catalytic mechanism.

This sequence belongs to the SelU family. Monomer.

The catalysed reaction is 5-methylaminomethyl-2-thiouridine(34) in tRNA + selenophosphate + (2E)-geranyl diphosphate + H2O + H(+) = 5-methylaminomethyl-2-selenouridine(34) in tRNA + (2E)-thiogeraniol + phosphate + diphosphate. It catalyses the reaction 5-methylaminomethyl-2-thiouridine(34) in tRNA + (2E)-geranyl diphosphate = 5-methylaminomethyl-S-(2E)-geranyl-thiouridine(34) in tRNA + diphosphate. The enzyme catalyses 5-methylaminomethyl-S-(2E)-geranyl-thiouridine(34) in tRNA + selenophosphate + H(+) = 5-methylaminomethyl-2-(Se-phospho)selenouridine(34) in tRNA + (2E)-thiogeraniol. It carries out the reaction 5-methylaminomethyl-2-(Se-phospho)selenouridine(34) in tRNA + H2O = 5-methylaminomethyl-2-selenouridine(34) in tRNA + phosphate. Functionally, involved in the post-transcriptional modification of the uridine at the wobble position (U34) of tRNA(Lys), tRNA(Glu) and tRNA(Gln). Catalyzes the conversion of 2-thiouridine (S2U-RNA) to 2-selenouridine (Se2U-RNA). Acts in a two-step process involving geranylation of 2-thiouridine (S2U) to S-geranyl-2-thiouridine (geS2U) and subsequent selenation of the latter derivative to 2-selenouridine (Se2U) in the tRNA chain. In Salmonella choleraesuis (strain SC-B67), this protein is tRNA 2-selenouridine synthase.